The following is a 35-amino-acid chain: Peptide ToHyp2 (35 aa).

Residues 1–29 (LPKPPLLPPPVPGLAPGLPPLPVPDPVPH) show a composition bias toward pro residues. The interval 1–35 (LPKPPLLPPPVPGLAPGLPPLPVPDPVPHPPKKPP) is disordered. Hydroxyproline occurs at positions 5, 9, 10, 12, 16, 20, 31, and 35.

O-glycosylated; contains pentose side chains at some or all of the hydroxyproline residues. Glycosylation is required for full antifungal activity.

Its function is as follows. Antimicrobial peptide. Inhibits elongation of hyphae in B.sorokiniana (IC(50)=3.8 uM) but has no effect on this process or on germination of conidia in a panel of other phytopathogenic fungi. At concentrations above 10 uM, has antibacterial activity. This chain is Peptide ToHyp2, found in Taraxacum officinale (Common dandelion).